Consider the following 361-residue polypeptide: Phospho-N-acetylmuramoyl-pentapeptide-transferase (361 aa).

Helical transmembrane passes span 25-45, 73-93, 97-117, 134-154, 168-188, 200-220, 237-257, 264-284, 289-309, and 338-358; these read RAVL…PAVI, TMGG…WADL, YVWL…VDDW, YFWQ…TASL, ATFG…IVGA, GLAI…AYVA, AGEL…FLWF, VFMG…VAVV, IILF…MIQV, and QVVV…LSSL.

It belongs to the glycosyltransferase 4 family. MraY subfamily. Mg(2+) serves as cofactor.

It localises to the cell inner membrane. It catalyses the reaction UDP-N-acetyl-alpha-D-muramoyl-L-alanyl-gamma-D-glutamyl-meso-2,6-diaminopimeloyl-D-alanyl-D-alanine + di-trans,octa-cis-undecaprenyl phosphate = di-trans,octa-cis-undecaprenyl diphospho-N-acetyl-alpha-D-muramoyl-L-alanyl-D-glutamyl-meso-2,6-diaminopimeloyl-D-alanyl-D-alanine + UMP. The protein operates within cell wall biogenesis; peptidoglycan biosynthesis. Catalyzes the initial step of the lipid cycle reactions in the biosynthesis of the cell wall peptidoglycan: transfers peptidoglycan precursor phospho-MurNAc-pentapeptide from UDP-MurNAc-pentapeptide onto the lipid carrier undecaprenyl phosphate, yielding undecaprenyl-pyrophosphoryl-MurNAc-pentapeptide, known as lipid I. In Thiobacillus denitrificans (strain ATCC 25259 / T1), this protein is Phospho-N-acetylmuramoyl-pentapeptide-transferase.